We begin with the raw amino-acid sequence, 180 residues long: Major urinary protein 6 (180 aa).

The signal sequence occupies residues 1 to 18; sequence MKMLLLLCLGLTLVCVHA. A disulfide bond links C82 and C175.

It belongs to the calycin superfamily. Lipocalin family. Abundant in the urine of adult male mice but absent from that of females.

It localises to the secreted. Binds pheromones that are released from drying urine of males. These pheromones affect the sexual behavior of females. This chain is Major urinary protein 6 (Mup6), found in Mus musculus (Mouse).